The primary structure comprises 342 residues: MAPSFDFAASILLCAEDNTAILDLGEESEEISWVVGVDASLGDLSMDFPLQSDDCIEALLGREEQQHIPMEGYLQRLLLQPDGLDLVAVRSDAIDWIWKVHELYKFGPLTAVLSVNYLDRFLSVFDLPQEEACMTQLLAVASLSLAAKMEETVVPHPLDLQVCDAKYVFETRTIKRMELAVLNALKWRMQAVTACSFIDYYLHKFNDDDTPSTSALSRSVDLILSTCKVAEFLVFRPSEIAASVALVALEEHETSMFERVATCYKNLKKERVLRCYEMIQDKIIMRNIMRQSAGSVFSIPKSPIGVLDAAACISQQSEDTFVGSPATNYESSASSKRRRICR.

The span at 322-334 (VGSPATNYESSAS) shows a compositional bias: polar residues. The disordered stretch occupies residues 322–342 (VGSPATNYESSASSKRRRICR).

It belongs to the cyclin family. Cyclin D subfamily.

The chain is Cyclin-D3-1 (CYCD3-1) from Oryza sativa subsp. japonica (Rice).